Here is a 194-residue protein sequence, read N- to C-terminus: uncharacterized protein (194 aa).

The first 15 residues, 1-15 (MFVLSIALLSCTTLC), serve as a signal peptide directing secretion. The region spanning 49-134 (CPQGLHADAI…KATYYEKIRC (86 aa)) is the PAN domain. 2 cysteine pairs are disulfide-bonded: cysteine 49–cysteine 134 and cysteine 79–cysteine 106.

This is an uncharacterized protein from Caenorhabditis elegans.